A 484-amino-acid chain; its full sequence is Fumarate hydratase class II (484 aa).

A disordered region spans residues 1-22 (MPSILDLPIGTGATGKRKESDS). Residues 110-112 (SGT), 141-144 (HPND), 151-153 (SSN), and Thr199 contribute to the substrate site. His200 acts as the Proton donor/acceptor in catalysis. Residue Ser330 is part of the active site. Residues Ser331 and 336–338 (KVN) contribute to the substrate site.

Belongs to the class-II fumarase/aspartase family. Fumarase subfamily. As to quaternary structure, homotetramer.

It is found in the cytoplasm. The catalysed reaction is (S)-malate = fumarate + H2O. It participates in carbohydrate metabolism; tricarboxylic acid cycle; (S)-malate from fumarate: step 1/1. In terms of biological role, involved in the TCA cycle. Catalyzes the stereospecific interconversion of fumarate to L-malate. The polypeptide is Fumarate hydratase class II (Methanosarcina acetivorans (strain ATCC 35395 / DSM 2834 / JCM 12185 / C2A)).